The primary structure comprises 171 residues: Peptide methionine sulfoxide reductase MsrA (171 aa).

Residue Cys13 is part of the active site.

Belongs to the MsrA Met sulfoxide reductase family.

The enzyme catalyses L-methionyl-[protein] + [thioredoxin]-disulfide + H2O = L-methionyl-(S)-S-oxide-[protein] + [thioredoxin]-dithiol. It catalyses the reaction [thioredoxin]-disulfide + L-methionine + H2O = L-methionine (S)-S-oxide + [thioredoxin]-dithiol. Has an important function as a repair enzyme for proteins that have been inactivated by oxidation. Catalyzes the reversible oxidation-reduction of methionine sulfoxide in proteins to methionine. This chain is Peptide methionine sulfoxide reductase MsrA, found in Mycobacterium ulcerans (strain Agy99).